Here is a 759-residue protein sequence, read N- to C-terminus: MIYRHIKIRDMNDDDLINMSKRHGLSLSLDEMKAVRDYFIKEGRDPIDAEIHAIAQSWSEHCSYKSSKFYLKKYLTNLKTDYTILAMEDDAGVVEFDKDYAYVLKMESHNHPSAVEPYGGAATGIGGIVRDVVCMGAQPIALVDSLFMGDVASQKYDALLSPRYIFQGVVGGIRDYGNRIGVPNVAGSVYFDQSYNSNPLVNAGCIGIVRKDRIVRSKSYKAGDKLLLVGGKTGRDGIHGVNFASATLTRISKSSRNAIQLGNPIVEHPMMRAVLEANELGIIKAMKDLGGGGLSSAATEMVFAGGFGAEISLDDIKLKDTDMSGWEIWISESQERMLVEVLPEDVEKMKEIAEKWSLDFSILGTVVEGKKITVRYKNKKIIDMDIEFLDKAPVYQRPFERKNIEKKVSIPSEPEDLNDFALNFVSRLNNSARFNVVRQYDHTVRGSTIVGPFSGRPNLETHSDATVIKPLEDSMRGLLITSGSRPNFVSIDPYNGTLETLSEAVRNIVSTGGKPNSVVDALNFGNPERQDIMGQFVESVRAIGDFCRKFSLPVVAGNVSFYNEFRNKDIMPTPTIMMVGIIDDVTKARTTYFKKNKSQIYLVGTPCDNLSGSEYARMNNIFDGFLPAPNLSELQLEIEKIGKFSPYILSAHDVSDGGLFMALAEMSFGSGIGFNIDLGNVSASRSSVKLFSECGNQIVLEIDPIHEEEFTAEFKDLKIVRIGETGGDRIIIDEYGMNLVDLPVQDLRERWEHGLDAYI.

His-61 is an active-site residue. Tyr-64 and Lys-105 together coordinate ATP. Glu-107 contributes to the Mg(2+) binding site. Residues 108-111 (SHNH) and Arg-130 each bind substrate. His-109 functions as the Proton acceptor in the catalytic mechanism. Asp-131 is a binding site for Mg(2+). Residue Gln-260 coordinates substrate. Asp-288 serves as a coordination point for Mg(2+). A substrate-binding site is contributed by 332–334 (ESQ). Residues Asp-520 and Gly-557 each contribute to the ATP site. Asn-558 lines the Mg(2+) pocket. A substrate-binding site is contributed by Ser-560.

Belongs to the FGAMS family. Monomer. Part of the FGAM synthase complex composed of 1 PurL, 1 PurQ and 2 PurS subunits.

Its subcellular location is the cytoplasm. The catalysed reaction is N(2)-formyl-N(1)-(5-phospho-beta-D-ribosyl)glycinamide + L-glutamine + ATP + H2O = 2-formamido-N(1)-(5-O-phospho-beta-D-ribosyl)acetamidine + L-glutamate + ADP + phosphate + H(+). Its pathway is purine metabolism; IMP biosynthesis via de novo pathway; 5-amino-1-(5-phospho-D-ribosyl)imidazole from N(2)-formyl-N(1)-(5-phospho-D-ribosyl)glycinamide: step 1/2. Part of the phosphoribosylformylglycinamidine synthase complex involved in the purines biosynthetic pathway. Catalyzes the ATP-dependent conversion of formylglycinamide ribonucleotide (FGAR) and glutamine to yield formylglycinamidine ribonucleotide (FGAM) and glutamate. The FGAM synthase complex is composed of three subunits. PurQ produces an ammonia molecule by converting glutamine to glutamate. PurL transfers the ammonia molecule to FGAR to form FGAM in an ATP-dependent manner. PurS interacts with PurQ and PurL and is thought to assist in the transfer of the ammonia molecule from PurQ to PurL. This Thermoplasma volcanium (strain ATCC 51530 / DSM 4299 / JCM 9571 / NBRC 15438 / GSS1) protein is Phosphoribosylformylglycinamidine synthase subunit PurL.